Reading from the N-terminus, the 419-residue chain is UDP-N-acetylglucosamine 1-carboxyvinyltransferase (419 aa).

Residue 22–23 participates in phosphoenolpyruvate binding; it reads KN. Residue Arg93 coordinates UDP-N-acetyl-alpha-D-glucosamine. Cys117 (proton donor) is an active-site residue. 2-(S-cysteinyl)pyruvic acid O-phosphothioketal is present on Cys117. Asp307 and Ile329 together coordinate UDP-N-acetyl-alpha-D-glucosamine.

The protein belongs to the EPSP synthase family. MurA subfamily.

It localises to the cytoplasm. It carries out the reaction phosphoenolpyruvate + UDP-N-acetyl-alpha-D-glucosamine = UDP-N-acetyl-3-O-(1-carboxyvinyl)-alpha-D-glucosamine + phosphate. The protein operates within cell wall biogenesis; peptidoglycan biosynthesis. Cell wall formation. Adds enolpyruvyl to UDP-N-acetylglucosamine. This Shewanella frigidimarina (strain NCIMB 400) protein is UDP-N-acetylglucosamine 1-carboxyvinyltransferase.